Here is a 274-residue protein sequence, read N- to C-terminus: Rhamnulose-1-phosphate aldolase (274 aa).

Glu117 is a catalytic residue. Residues His141, His143, and His212 each coordinate Zn(2+).

The protein belongs to the aldolase class II family. RhaD subfamily. Homotetramer. Requires Zn(2+) as cofactor.

The protein localises to the cytoplasm. The catalysed reaction is L-rhamnulose 1-phosphate = (S)-lactaldehyde + dihydroxyacetone phosphate. Its pathway is carbohydrate degradation; L-rhamnose degradation; glycerone phosphate from L-rhamnose: step 3/3. Its function is as follows. Catalyzes the reversible cleavage of L-rhamnulose-1-phosphate to dihydroxyacetone phosphate (DHAP) and L-lactaldehyde. This Escherichia coli O6:H1 (strain CFT073 / ATCC 700928 / UPEC) protein is Rhamnulose-1-phosphate aldolase.